Consider the following 366-residue polypeptide: UPF0329 protein ECU01_0130/ECU01_1480/ECU08_0060 (366 aa).

Residues 325-366 are disordered; sequence IRKEEKRIRKEEERAKNEEELLRMVESEEGKSGEGEEGCRRG.

This sequence belongs to the UPF0329 family.

The chain is UPF0329 protein ECU01_0130/ECU01_1480/ECU08_0060 from Encephalitozoon cuniculi (strain GB-M1) (Microsporidian parasite).